The following is a 407-amino-acid chain: Betaine--homocysteine S-methyltransferase 1 (407 aa).

The region spanning 11–314 (KGILERLNSG…YHIRAIAEEL (304 aa)) is the Hcy-binding domain. Residues K40, K93, and K98 each carry the N6-succinyllysine modification. C217 is a Zn(2+) binding site. An N6-succinyllysine mark is found at K232 and K241. Residues C299 and C300 each contribute to the Zn(2+) site. Residue S330 is modified to Phosphoserine. N6-succinyllysine is present on residues K340 and K377.

In terms of assembly, homotetramer. The cofactor is Zn(2+).

The protein localises to the cytoplasm. The protein resides in the cytosol. It is found in the nucleus. It catalyses the reaction L-homocysteine + glycine betaine = N,N-dimethylglycine + L-methionine. Its pathway is amine and polyamine degradation; betaine degradation; sarcosine from betaine: step 1/2. The protein operates within amino-acid biosynthesis; L-methionine biosynthesis via de novo pathway; L-methionine from L-homocysteine (BhmT route): step 1/1. In terms of biological role, involved in the regulation of homocysteine metabolism. Converts betaine and homocysteine to dimethylglycine and methionine, respectively. This reaction is also required for the irreversible oxidation of choline. This is Betaine--homocysteine S-methyltransferase 1 (BHMT) from Bos taurus (Bovine).